Reading from the N-terminus, the 307-residue chain is Alpha N-terminal protein methyltransferase 1 (307 aa).

Positions 38 to 51 are enriched in low complexity; that stretch reads EPAPAPAAGSNGVA. The interval 38–60 is disordered; sequence EPAPAPAAGSNGVAGEEEAGGGG. S-adenosyl-L-methionine is bound by residues glycine 123, arginine 128, 145-147, 179-180, and glutamine 195; these read EPV and LQ.

The protein belongs to the methyltransferase superfamily. NTM1 family.

The enzyme catalyses N-terminal L-alanyl-L-prolyl-L-lysyl-[protein] + 3 S-adenosyl-L-methionine = N-terminal N,N,N-trimethyl-L-alanyl-L-prolyl-L-lysyl-[protein] + 3 S-adenosyl-L-homocysteine + 3 H(+). It carries out the reaction N-terminal L-seryl-L-prolyl-L-lysyl-[protein] + 3 S-adenosyl-L-methionine = N-terminal N,N,N-trimethyl-L-seryl-L-prolyl-L-lysyl-[protein] + 3 S-adenosyl-L-homocysteine + 3 H(+). The catalysed reaction is N-terminal L-prolyl-L-prolyl-L-lysyl-[protein] + 2 S-adenosyl-L-methionine = N-terminal N,N-dimethyl-L-prolyl-L-prolyl-L-lysyl-[protein] + 2 S-adenosyl-L-homocysteine + 2 H(+). In terms of biological role, alpha-N-methyltransferase that methylates the N-terminus of target proteins containing the N-terminal motif [Ala/Pro/Ser]-Pro-Lys when the initiator Met is cleaved. Specifically catalyzes mono-, di- or tri-methylation of exposed alpha-amino group of Ala or Ser residue in the [Ala/Ser]-Pro-Lys motif and mono- or di-methylation of Pro in the Pro-Pro-Lys motif. In Oryza sativa subsp. japonica (Rice), this protein is Alpha N-terminal protein methyltransferase 1.